Here is a 138-residue protein sequence, read N- to C-terminus: Large ribosomal subunit protein uL16 (138 aa).

Residues 1 to 17 (MLIPRKVKHRKQHHPKQ) are compositionally biased toward basic residues. The tract at residues 1 to 24 (MLIPRKVKHRKQHHPKQRGIASGG) is disordered.

This sequence belongs to the universal ribosomal protein uL16 family. Part of the 50S ribosomal subunit.

Binds 23S rRNA and is also seen to make contacts with the A and possibly P site tRNAs. This is Large ribosomal subunit protein uL16 from Mycolicibacterium vanbaalenii (strain DSM 7251 / JCM 13017 / BCRC 16820 / KCTC 9966 / NRRL B-24157 / PYR-1) (Mycobacterium vanbaalenii).